The chain runs to 870 residues: MOG interacting and ectopic P-granules protein 1 (870 aa).

The tract at residues 1 to 244 is disordered; sequence MVTADETVLA…VPEEDNNEQA (244 aa). The span at 9–20 shows a compositional bias: polar residues; it reads LATTTNTTSMSV. A compositionally biased stretch (basic and acidic residues) spans 41–51; the sequence is EQLKAEQREVM. Composition is skewed to acidic residues over residues 77 to 99, 129 to 142, and 203 to 214; these read EVIE…DENG, IEQD…EITE, and IELDDDDDDEIQ. C2H2-type zinc fingers lie at residues 421–444 and 450–473; these read HRCD…ENLH and FQCT…FETH. The CCHC-type zinc finger occupies 486-508; it reads YPCAICEEDFNFKGVREQHYKQC. Polar residues-rich tracts occupy residues 673–688 and 695–708; these read LQAA…SQKT and KLVT…VGSS. Residues 673–708 are disordered; the sequence is LQAAVNSMRSQNSQKTPTHRSSKLVTTPSHATVGSS. 4 C2H2-type zinc fingers span residues 713-736, 753-776, 794-815, and 826-849; these read FVCE…QTTH, LACS…VMSH, GRCK…VADH, and YSCD…TSNH. Residues 847 to 870 are disordered; that stretch reads SNHPKGDKKTSTPAKKDDCITLDD. Positions 850–870 are enriched in basic and acidic residues; it reads PKGDKKTSTPAKKDDCITLDD.

As to quaternary structure, interacts with hda-1, let-418, lin-1, mog-1, mog-4, mog-5, mog-6, pie-1 and unc-98. In terms of processing, sumoylated. In terms of tissue distribution, expressed in somatic cells of embryos, the head, hypodermis and tail of larvae and the germline of adults, including oocytes but not mature sperm and spermatocytes.

The protein resides in the nucleus. Functionally, has a broad role in development, specifically in the genetic pathway SynMuvB that negatively regulates specification of the vulval cell fate. Required for fem-3 3'-UTR-mediated repression in the regulation of the sperm/oocyte switch. Acts by regulating the translation of fem-3 mRNA, by binding to its 3'-UTR. This is MOG interacting and ectopic P-granules protein 1 from Caenorhabditis elegans.